We begin with the raw amino-acid sequence, 255 residues long: Hydroxyacylglutathione hydrolase (255 aa).

Residues His-59, His-61, Asp-63, His-64, His-118, Asp-144, and His-182 each contribute to the Zn(2+) site.

This sequence belongs to the metallo-beta-lactamase superfamily. Glyoxalase II family. As to quaternary structure, monomer. It depends on Zn(2+) as a cofactor.

It carries out the reaction an S-(2-hydroxyacyl)glutathione + H2O = a 2-hydroxy carboxylate + glutathione + H(+). Its pathway is secondary metabolite metabolism; methylglyoxal degradation; (R)-lactate from methylglyoxal: step 2/2. In terms of biological role, thiolesterase that catalyzes the hydrolysis of S-D-lactoyl-glutathione to form glutathione and D-lactic acid. The sequence is that of Hydroxyacylglutathione hydrolase from Synechococcus sp. (strain WH7803).